Reading from the N-terminus, the 478-residue chain is Monocarboxylate transporter 2 (478 aa).

The Cytoplasmic portion of the chain corresponds to 1-15 (MPPMPSAPPVHPPPD). The helical transmembrane segment at 16 to 36 (GGWGWIVVGAAFISIGFSYAF) threads the bilayer. Over 37–59 (PKAVTVFFKEIQQIFHTTYSEIA) the chain is Extracellular. Residues 60-80 (WISSIMLAVMYAGGPVSSVLV) form a helical membrane-spanning segment. Over 81–89 (NKYGSRPVV) the chain is Cytoplasmic. A helical transmembrane segment spans residues 90–110 (IAGGLLCCLGMVLASFSSSVV). At 111–115 (QLYLT) the chain is on the extracellular side. A helical transmembrane segment spans residues 116 to 136 (MGFITGLGLAFNLQPALTIIG). The Cytoplasmic portion of the chain corresponds to 137-148 (KYFYRKRPMANG). A helical membrane pass occupies residues 149–169 (LAMAGSPVFLSSLAPFNQYLF). Residues 170-173 (NTFG) lie on the Extracellular side of the membrane. Residues 174–194 (WKGSFLILGSLLLNACVAGSL) form a helical membrane-spanning segment. At 195–246 (MRPLGPNQTTSKSKNKTGKTEDDSSPKKIKTKKSTWEKVNKYLDFSLFKHRG) the chain is on the cytoplasmic side. Positions 200-224 (PNQTTSKSKNKTGKTEDDSSPKKIK) are disordered. Residues 247–267 (FLIYLSGNVIMFLGFFAPIIF) form a helical membrane-spanning segment. At 268-282 (LAPYAKDQGIDEYSA) the chain is on the extracellular side. The chain crosses the membrane as a helical span at residues 283–303 (AFLLSVMAFVDMFARPSVGLI). Over 304 to 312 (ANSKYIRPR) the chain is Cytoplasmic. The chain crosses the membrane as a helical span at residues 313-333 (IQYFFSFAIMFNGVCHLLCPL). At 334 to 338 (AQDYT) the chain is on the extracellular side. A helical membrane pass occupies residues 339 to 359 (SLVLYAVFFGLGFGSVSSVLF). Over 360 to 373 (ETLMDLVGAPRFSS) the chain is Cytoplasmic. A helical membrane pass occupies residues 374–394 (AVGLVTIVECGPVLLGPPLAG). Residues 395–406 (KLVDLTGEYKYM) lie on the Extracellular side of the membrane. The helical transmembrane segment at 407 to 427 (YMSCGAIVVAASVWLLIGNAI) threads the bilayer. Residues 428-478 (NYRLLAKERKEENARQKTRESEPLSKSKHSEDVNVKVSNAQSVTSERETNI) lie on the Cytoplasmic side of the membrane. Over residues 437–461 (KEENARQKTRESEPLSKSKHSEDVN) the composition is skewed to basic and acidic residues. The interval 437–478 (KEENARQKTRESEPLSKSKHSEDVNVKVSNAQSVTSERETNI) is disordered.

Belongs to the major facilitator superfamily. Monocarboxylate porter (TC 2.A.1.13) family. Homodimer. Interacts with GRID2IP. Interacts with EMB; interaction mediates SLC16A7 targeting to the plasma membrane. Interacts with isoform 2 of BSG. In terms of tissue distribution, detected in heart and in blood lymphocytes and monocytes (at protein level). High expression in testis, moderate to low in spleen, heart, kidney, pancreas, skeletal muscle, brain and leukocyte. Restricted expression in normal tissues, but widely expressed in cancer cells.

Its subcellular location is the cell membrane. The protein localises to the basolateral cell membrane. The protein resides in the cytoplasm. It catalyses the reaction pyruvate(out) + H(+)(out) = pyruvate(in) + H(+)(in). The enzyme catalyses 3-methyl-2-oxobutanoate(out) + H(+)(out) = 3-methyl-2-oxobutanoate(in) + H(+)(in). It carries out the reaction (S)-lactate(in) + H(+)(in) = (S)-lactate(out) + H(+)(out). The catalysed reaction is acetoacetate(out) + H(+)(out) = acetoacetate(in) + H(+)(in). It catalyses the reaction (R)-3-hydroxybutanoate(out) + H(+)(out) = (R)-3-hydroxybutanoate(in) + H(+)(in). The enzyme catalyses 4-methyl-2-oxopentanoate(out) + H(+)(out) = 4-methyl-2-oxopentanoate(in) + H(+)(in). It carries out the reaction (S)-3-hydroxybutanoate(out) + H(+)(out) = (S)-3-hydroxybutanoate(in) + H(+)(in). Its activity is regulated as follows. Transport activity exhibits steep dependence on substrate concentration. Substrate concentration sensitivity of SLC16A7 arises from the strong inter-subunit cooperativity of the SLC16A7 dimer during transport. Inhibited by AR-C155858. In terms of biological role, proton-coupled monocarboxylate symporter. Catalyzes the rapid transport across the plasma membrane of monocarboxylates such as L-lactate, pyruvate and ketone bodies, acetoacetate, beta-hydroxybutyrate and acetate. Dimerization is functionally required and both subunits work cooperatively in transporting substrate. This Homo sapiens (Human) protein is Monocarboxylate transporter 2.